A 418-amino-acid chain; its full sequence is L-rhamnose isomerase (418 aa).

Positions 261, 293, and 295 each coordinate Mn(2+).

Belongs to the rhamnose isomerase family. Mn(2+) is required as a cofactor.

It localises to the cytoplasm. The catalysed reaction is L-rhamnopyranose = L-rhamnulose. It participates in carbohydrate degradation; L-rhamnose degradation; glycerone phosphate from L-rhamnose: step 1/3. Catalyzes the interconversion of L-rhamnose and L-rhamnulose. The sequence is that of L-rhamnose isomerase from Clostridium beijerinckii (strain ATCC 51743 / NCIMB 8052) (Clostridium acetobutylicum).